We begin with the raw amino-acid sequence, 770 residues long: U3 small nucleolar RNA-associated protein 14 homolog A (770 aa).

A compositionally biased stretch (polar residues) spans 1 to 17 (MNANQAAESNLLASNQQ). Residues 1–65 (MNANQAAESN…GKDRQKLADR (65 aa)) are disordered. Phosphoserine is present on residues Ser30, Ser32, and Ser53. Positions 41 to 68 (ERKHQKLLESISSLNGKDRQKLADRSEA) form a coiled coil. The span at 56 to 65 (GKDRQKLADR) shows a compositional bias: basic and acidic residues. 2 positions are modified to phosphoserine: Ser78 and Ser82. Thr206 carries the phosphothreonine modification. Coiled coils occupy residues 217-291 (SLEE…DKAR) and 318-348 (LEAR…EEEG). 3 disordered regions span residues 334–361 (LTQK…LVPD), 392–455 (KDLE…SSQE), and 467–505 (LRTE…RPER). Composition is skewed to acidic residues over residues 343–358 (ESEE…EEPL) and 396–410 (DPAE…ESEE). Phosphoserine occurs at positions 406 and 408. Residues 411 to 444 (EKAVVEEETLLKEFEERRSLRQKSELNHMAEPVH) are compositionally biased toward basic and acidic residues. Lys449 participates in a covalent cross-link: Glycyl lysine isopeptide (Lys-Gly) (interchain with G-Cter in SUMO2). Residue Ser453 is modified to Phosphoserine. Ser567 carries the phosphoserine modification. Arg588 carries the post-translational modification Citrulline. A Glycyl lysine isopeptide (Lys-Gly) (interchain with G-Cter in SUMO2) cross-link involves residue Lys732.

This sequence belongs to the UTP14 family. In terms of assembly, interacts with DHX37. In terms of processing, citrullinated by PADI4.

Its subcellular location is the nucleus. It localises to the nucleolus. Its function is as follows. May be required for ribosome biogenesis. This is U3 small nucleolar RNA-associated protein 14 homolog A (UTP14A) from Bos taurus (Bovine).